The primary structure comprises 197 residues: Probable GTP-binding protein EngB (197 aa).

The region spanning 22–195 (NLPEIAFVGR…VDYLFDDLVE (174 aa)) is the EngB-type G domain. GTP contacts are provided by residues 30–37 (GRSNVGKS), 57–61 (GKTRL), 75–78 (DLPG), 142–145 (TKSD), and 174–176 (FSS). Residues Ser-37 and Thr-59 each contribute to the Mg(2+) site.

Belongs to the TRAFAC class TrmE-Era-EngA-EngB-Septin-like GTPase superfamily. EngB GTPase family. Mg(2+) is required as a cofactor.

Necessary for normal cell division and for the maintenance of normal septation. The protein is Probable GTP-binding protein EngB of Clostridium perfringens (strain SM101 / Type A).